The following is a 227-amino-acid chain: MSSLYQKLSRRIGYFFADLGLLELALTHRSFGGKNNERLEFLGDSILNYVIAEDLFHRFPKAKEGELSRLRASLVKGDTLAELAREFELGDYLKLGAGELKSGGFRRDSILADTVEGIIGAMYLDAGMDVCRQHILAWYKERLDATSLKIVTKDAKTRLQEFLQARKHALPQYDVVNIVGEPHDQTFYVHCHIELCEEFIEGKGNSRRIAEQNAAAKALKKLEKKDV.

In terms of domain architecture, RNase III spans 5 to 127 (YQKLSRRIGY…IIGAMYLDAG (123 aa)). Glutamate 40 is a Mg(2+) binding site. Aspartate 44 is an active-site residue. Mg(2+) contacts are provided by aspartate 113 and glutamate 116. The active site involves glutamate 116. In terms of domain architecture, DRBM spans 154-224 (DAKTRLQEFL…AAKALKKLEK (71 aa)).

It belongs to the ribonuclease III family. In terms of assembly, homodimer. Mg(2+) is required as a cofactor.

It localises to the cytoplasm. The enzyme catalyses Endonucleolytic cleavage to 5'-phosphomonoester.. Digests double-stranded RNA. Involved in the processing of primary rRNA transcript to yield the immediate precursors to the large and small rRNAs (23S and 16S). Processes some mRNAs, and tRNAs when they are encoded in the rRNA operon. Processes pre-crRNA and tracrRNA of type II CRISPR loci if present in the organism. The protein is Ribonuclease 3 of Marinomonas sp. (strain MWYL1).